A 287-amino-acid polypeptide reads, in one-letter code: Lys-63-specific deubiquitinase (287 aa).

The MPN domain occupies 33 to 176; sequence VHLESDAFLV…YTCFQSVQAQ (144 aa). Zn(2+)-binding residues include histidine 119, histidine 121, and aspartate 132. A JAMM motif motif is present at residues 119-132; the sequence is HSHPHITVWPSHVD. Residues 256-283 adopt a coiled-coil conformation; that stretch reads LQWLEDRLEQNKQSIITLQKEKELLTQE.

This sequence belongs to the peptidase M67A family. BRCC36 subfamily. In terms of assembly, monomer. Homodimer. Component of the BRISC complex, at least composed of abraxas2, brcc3, babam1 and babam2. Interacts with abraxas2; the interaction is direct and may form a heterotetramer. Component of the BRCA1-A complex. Both the BRCA1-A complex and the BRISC complex bind polyubiquitin. Zn(2+) is required as a cofactor.

The protein resides in the nucleus. It is found in the cytoplasm. It localises to the cytoskeleton. The protein localises to the spindle pole. Metalloprotease that specifically cleaves 'Lys-63'-linked polyubiquitin chains, leaving the last ubiquitin chain attached to its substrates. Catalytic subunit of the BRISC complex, a multiprotein complex that specifically cleaves 'Lys-63'-linked ubiquitin in various substrates; brcc3 does not have activity by itself, but needs to be associated into a higher-order assembly, for minimal in vitro activity. In Danio rerio (Zebrafish), this protein is Lys-63-specific deubiquitinase.